The chain runs to 1053 residues: 3-hydroxy-3-methylglutaryl-coenzyme A reductase (1053 aa).

At 1-8 (MIYKLAAR) the chain is on the cytoplasmic side. Residues 9-29 (YPIQVIAIVGILVSMAYFSFL) form a helical membrane-spanning segment. At 30–203 (EALTQEDFPV…LKIASQASKT (174 aa)) the chain is on the lumenal side. N-linked (GlcNAc...) asparagine glycosylation is present at Asn-137. The helical transmembrane segment at 204–224 (ELLIVGTAYACMLISIVSLYL) threads the bilayer. Residues 204 to 365 (ELLIVGTAYA…FSFFVAILTL (162 aa)) enclose the SSD domain. The Cytoplasmic segment spans residues 225-232 (KMRRLGSK). A helical transmembrane segment spans residues 233–253 (FWLFFSVLLSTLFSVQFAMTL). Over 254 to 258 (VRASG) the chain is Lumenal. A helical membrane pass occupies residues 259–279 (VRISLVSLIESLPFLINVVAL). The Cytoplasmic segment spans residues 280-320 (DKAAELTRQVITRCSVSDSHSPMHEDIAKACRNAAPPILRH). 2 helical membrane passes run 321 to 341 (FSFG…IKQF) and 342 to 362 (FLFA…FVAI). The Cytoplasmic portion of the chain corresponds to 363 to 417 (LTLKLEMRRYNAKDDVRKVLIEEGLSESTARHVADGNDSSATTSAGSRYFKVRYG). Residues 418–438 (TKIILFIFIAFNLFELCSIPF) traverse the membrane as a helical segment. Residues 439–526 (KHYAATSAAA…NNWSHYISAS (88 aa)) lie on the Lumenal side of the membrane. N-linked (GlcNAc...) asparagine glycosylation occurs at Asn-518. The helical transmembrane segment at 527–547 (FLSKWIVCALSLSIAVNVFLL) threads the bilayer. Topologically, residues 548 to 1053 (NAARLNSIKE…KSVNSRVPGR (506 aa)) are cytoplasmic. Glu-712 (charge relay system) is an active-site residue. 718–724 (STMRGCK) provides a ligand contact to CoA. Residues 779-781 (SRF) and 806-814 (DAMGMNMIS) each bind NADP(+). Catalysis depends on Lys-846, which acts as the Charge relay system. Residue 875 to 877 (VLK) participates in CoA binding. Asp-922 functions as the Charge relay system in the catalytic mechanism. 1017 to 1018 (SH) contacts CoA. The Proton donor role is filled by His-1018. NADP(+) is bound at residue 1022–1023 (NR). At Ser-1024 the chain carries Phosphoserine. Thr-1028 bears the Phosphothreonine mark. The tract at residues 1028 to 1053 (TPAMDSSAKKPATDALKSVNSRVPGR) is disordered.

It belongs to the HMG-CoA reductase family.

Its subcellular location is the endoplasmic reticulum membrane. The protein resides in the nucleus envelope. The enzyme catalyses (R)-mevalonate + 2 NADP(+) + CoA = (3S)-3-hydroxy-3-methylglutaryl-CoA + 2 NADPH + 2 H(+). It functions in the pathway metabolic intermediate biosynthesis; (R)-mevalonate biosynthesis; (R)-mevalonate from acetyl-CoA: step 3/3. Part of the first module of ergosterol biosynthesis pathway that includes the early steps of the pathway, conserved across all eukaryotes, and which results in the formation of mevalonate from acetyl-coenzyme A (acetyl-CoA). Hmg1 catalyzes the reduction of hydroxymethylglutaryl-CoA (HMG-CoA) to mevalonate. The first module starts with the action of the cytosolic acetyl-CoA acetyltransferase eg10 that catalyzes the formation of acetoacetyl-CoA. The hydroxymethylglutaryl-CoA synthases erg13 then condenses acetyl-CoA with acetoacetyl-CoA to form HMG-CoA. The rate-limiting step of the early module is the reduction to mevalonate by the 3-hydroxy-3-methylglutaryl-coenzyme A (HMG-CoA) reductases hcs1. The sequence is that of 3-hydroxy-3-methylglutaryl-coenzyme A reductase from Schizosaccharomyces pombe (strain 972 / ATCC 24843) (Fission yeast).